Here is a 189-residue protein sequence, read N- to C-terminus: Interferon alpha-D (189 aa).

Positions 1–23 (MAPAWSLLLALLLLSCNAICSLG) are cleaved as a signal peptide. Intrachain disulfides connect Cys24-Cys122 and Cys52-Cys162.

This sequence belongs to the alpha/beta interferon family.

It localises to the secreted. Its function is as follows. Produced by macrophages, IFN-alpha have antiviral activities. Interferon stimulates the production of two enzymes: a protein kinase and an oligoadenylate synthetase. This chain is Interferon alpha-D (IFNAD), found in Bos taurus (Bovine).